The following is a 319-amino-acid chain: tRNA uridine(34) hydroxylase (319 aa).

A Rhodanese domain is found at 127-221 (KQEDTVIIDA…YGKDPEVQGE (95 aa)). Cys-181 acts as the Cysteine persulfide intermediate in catalysis.

The protein belongs to the TrhO family.

It carries out the reaction uridine(34) in tRNA + AH2 + O2 = 5-hydroxyuridine(34) in tRNA + A + H2O. Functionally, catalyzes oxygen-dependent 5-hydroxyuridine (ho5U) modification at position 34 in tRNAs. This is tRNA uridine(34) hydroxylase from Bacillus cereus (strain G9842).